Here is a 153-residue protein sequence, read N- to C-terminus: Pheromone-binding protein Gp-9 (153 aa).

The signal sequence occupies residues 1–19 (MKTFVLHIFIFALVAFASA). Cystine bridges form between Cys-37/Cys-77, Cys-73/Cys-129, and Cys-118/Cys-138.

The protein belongs to the PBP/GOBP family. Homodimer.

Its subcellular location is the secreted. Functionally, colony queen number, a major feature of social organization, is associated with worker genotype for Gp-9. Colonies are headed by either a single reproductive queen (monogyne form) or multiple queens (polygyne form). Differences in worker Gp-9 genotypes between social forms may cause differences in workers' abilities to recognize queens and regulate their numbers. This Solenopsis substituta (Fire ant) protein is Pheromone-binding protein Gp-9.